The primary structure comprises 465 residues: MARTMAEKVWEEHVVRRAEGEPDLLYIDLHLIHEVTSPQAFEGLRLANRKLRRPDLTIATEDHNVPTENIFLPIADPVSRTQVETLRKNAAEFGVRLHPMGDIDQGIVHVIGPQLGLTQPGMTIVCGDSHTSTHGAFGALAFGIGTSQVEHVMATQTLPMTPFKTMAVNVEGKLKPGVTAKDIILAVIAQIGTGGGQGHVIEYRGEAIRSLSMEARMTICNMSIEAGARAGMIAPDQTTFDYLKGRPHAPKGELWDQAVEYWKTLPTDEGAVFDKEVFLNADELSPFVTWGTNPGQGVPLDSVVPDPESFTDPVERAAAEKALAYMDLKPGTRMRDIKIDTVFLGSCTNGRIEDLRAAAEVLKGRKVADGVRMLVVPGSQRVKQQAAAEGLDEIFKAAGAEWREAGCSMCLGMNPDTLKPGERSASTSNRNFEGRQGKGGRTHLVSPLVAAATAVRGTLSSPADL.

Residues cysteine 347, cysteine 407, and cysteine 410 each coordinate [4Fe-4S] cluster. The interval 417–443 (TLKPGERSASTSNRNFEGRQGKGGRTH) is disordered.

It belongs to the aconitase/IPM isomerase family. LeuC type 1 subfamily. As to quaternary structure, heterodimer of LeuC and LeuD. Requires [4Fe-4S] cluster as cofactor.

It catalyses the reaction (2R,3S)-3-isopropylmalate = (2S)-2-isopropylmalate. The protein operates within amino-acid biosynthesis; L-leucine biosynthesis; L-leucine from 3-methyl-2-oxobutanoate: step 2/4. Functionally, catalyzes the isomerization between 2-isopropylmalate and 3-isopropylmalate, via the formation of 2-isopropylmaleate. This chain is 3-isopropylmalate dehydratase large subunit, found in Thermobifida fusca (strain YX).